The sequence spans 186 residues: Cytochrome c oxidase subunit 4, mitochondrial (186 aa).

The transit peptide at 1–31 (MLLSRTAVAVARRATAAPALRRSIATTVVRC) directs the protein to the mitochondrion. Residues C118, H126, C142, and C145 each coordinate Zn(2+).

This sequence belongs to the cytochrome c oxidase subunit 5B family. In terms of assembly, component of the cytochrome c oxidase (complex IV, CIV), a multisubunit enzyme composed of 11 subunits. The complex is composed of a catalytic core of 3 subunits Cox1, Cox2 and Cox3, encoded in the mitochondrial DNA, and 8 supernumerary subunits Cox4, Cox5a/Cox5, Cox6, Cox7, Cox8, Cox7a/Cox9, Cox6b/Cox12 and Cox6a/Cox13, which are encoded in the nuclear genome. The complex exists as a monomer or a dimer and forms respiratory supercomplexes (SCs) in the inner mitochondrial membrane with NADH-ubiquinone oxidoreductase (complex I, CI) and ubiquinol-cytochrome c oxidoreductase (cytochrome b-c1 complex, complex III, CIII), resulting in various different assemblies (supercomplexes I(1)IV(1), I(1)III(3)IV(2), III(2)IV(1) and III(2)IV(2) as well as larger supercomplexes of compositions like I(1)III(2)IV(5-6)).

The protein localises to the mitochondrion inner membrane. It participates in energy metabolism; oxidative phosphorylation. Its function is as follows. Component of the cytochrome c oxidase, the last enzyme in the mitochondrial electron transport chain which drives oxidative phosphorylation. The respiratory chain contains 3 multisubunit complexes succinate dehydrogenase (complex II, CII), ubiquinol-cytochrome c oxidoreductase (cytochrome b-c1 complex, complex III, CIII) and cytochrome c oxidase (complex IV, CIV), that cooperate to transfer electrons derived from NADH and succinate to molecular oxygen, creating an electrochemical gradient over the inner membrane that drives transmembrane transport and the ATP synthase. Cytochrome c oxidase is the component of the respiratory chain that catalyzes the reduction of oxygen to water. Electrons originating from reduced cytochrome c in the intermembrane space (IMS) are transferred via the dinuclear copper A center (CU(A)) of Cox2 and heme A of Cox1 to the active site in Cox1, a binuclear center (BNC) formed by heme A3 and copper B (CU(B)). The BNC reduces molecular oxygen to 2 water molecules using 4 electrons from cytochrome c in the IMS and 4 protons from the mitochondrial matrix. This Neurospora crassa (strain ATCC 24698 / 74-OR23-1A / CBS 708.71 / DSM 1257 / FGSC 987) protein is Cytochrome c oxidase subunit 4, mitochondrial (cox-4).